A 271-amino-acid chain; its full sequence is Tryptophan synthase alpha chain (271 aa).

Residues Glu49 and Asp60 each act as proton acceptor in the active site.

Belongs to the TrpA family. In terms of assembly, tetramer of two alpha and two beta chains.

It carries out the reaction (1S,2R)-1-C-(indol-3-yl)glycerol 3-phosphate + L-serine = D-glyceraldehyde 3-phosphate + L-tryptophan + H2O. It functions in the pathway amino-acid biosynthesis; L-tryptophan biosynthesis; L-tryptophan from chorismate: step 5/5. In terms of biological role, the alpha subunit is responsible for the aldol cleavage of indoleglycerol phosphate to indole and glyceraldehyde 3-phosphate. This is Tryptophan synthase alpha chain from Burkholderia pseudomallei (strain K96243).